Consider the following 271-residue polypeptide: Acetyl-coenzyme A carboxylase carboxyl transferase subunit beta (271 aa).

One can recognise a CoA carboxyltransferase N-terminal domain in the interval 21 to 271 (LWIQCPYCKQ…LGDLLALHTA (251 aa)). Zn(2+) contacts are provided by Cys25, Cys28, Cys43, and Cys46. Residues 25 to 46 (CPYCKQGSYRESLGNAQVCPHC) form a C4-type zinc finger.

The protein belongs to the AccD/PCCB family. Acetyl-CoA carboxylase is a heterohexamer composed of biotin carboxyl carrier protein (AccB), biotin carboxylase (AccC) and two subunits each of ACCase subunit alpha (AccA) and ACCase subunit beta (AccD). Zn(2+) serves as cofactor.

It is found in the cytoplasm. The enzyme catalyses N(6)-carboxybiotinyl-L-lysyl-[protein] + acetyl-CoA = N(6)-biotinyl-L-lysyl-[protein] + malonyl-CoA. Its pathway is lipid metabolism; malonyl-CoA biosynthesis; malonyl-CoA from acetyl-CoA: step 1/1. In terms of biological role, component of the acetyl coenzyme A carboxylase (ACC) complex. Biotin carboxylase (BC) catalyzes the carboxylation of biotin on its carrier protein (BCCP) and then the CO(2) group is transferred by the transcarboxylase to acetyl-CoA to form malonyl-CoA. The sequence is that of Acetyl-coenzyme A carboxylase carboxyl transferase subunit beta from Lacticaseibacillus casei (strain BL23) (Lactobacillus casei).